A 74-amino-acid chain; its full sequence is Putative protein YozX (74 aa).

This chain is Putative protein YozX (yozX), found in Bacillus subtilis (strain 168).